The chain runs to 159 residues: Protein-export protein SecB (159 aa).

The protein belongs to the SecB family. As to quaternary structure, homotetramer, a dimer of dimers. One homotetramer interacts with 1 SecA dimer.

It is found in the cytoplasm. Functionally, one of the proteins required for the normal export of preproteins out of the cell cytoplasm. It is a molecular chaperone that binds to a subset of precursor proteins, maintaining them in a translocation-competent state. It also specifically binds to its receptor SecA. The sequence is that of Protein-export protein SecB from Rhizobium etli (strain CIAT 652).